The following is a 21-amino-acid chain: Japonicin-2 (21 aa).

A disulfide bridge links cysteine 14 with cysteine 21.

Expressed by the skin glands.

It localises to the secreted. Its function is as follows. Antibacterial activity against the Gram-negative bacterium E.coli and the Gram-positive bacterium S.aureus. The sequence is that of Japonicin-2 from Rana japonica (Japanese reddish frog).